The sequence spans 253 residues: MTGAGPAQAGPFRYTLAMHPIQVIERGREDYQPCFDAMRAFTVARTPETPDQVWLVEHPPVYTLGQAGDPAHLLAPDERIPMVQIDRGGQITYHGPGQVVAYLLLDLKRRKLMVRELVNDIEQAVLDTLAAYNLAAERKPGAPGIYLSDGPHRGAKIAALGLKIRNGCSYHGVSLNVQMDLAPFLRINPCGYAGLETVDMATAGGHWQDQPVTAAQQPDIARRLAAALCEVLAAREARALAADKTAATPALAS.

The region spanning 47–236 (PETPDQVWLV…ALCEVLAARE (190 aa)) is the BPL/LPL catalytic domain. Residues 87 to 94 (RGGQITYH), 159 to 161 (ALG), and 172 to 174 (GVS) each bind substrate. The active-site Acyl-thioester intermediate is the Cys-190.

The protein belongs to the LipB family.

It is found in the cytoplasm. The catalysed reaction is octanoyl-[ACP] + L-lysyl-[protein] = N(6)-octanoyl-L-lysyl-[protein] + holo-[ACP] + H(+). The protein operates within protein modification; protein lipoylation via endogenous pathway; protein N(6)-(lipoyl)lysine from octanoyl-[acyl-carrier-protein]: step 1/2. Catalyzes the transfer of endogenously produced octanoic acid from octanoyl-acyl-carrier-protein onto the lipoyl domains of lipoate-dependent enzymes. Lipoyl-ACP can also act as a substrate although octanoyl-ACP is likely to be the physiological substrate. This Cupriavidus pinatubonensis (strain JMP 134 / LMG 1197) (Cupriavidus necator (strain JMP 134)) protein is Octanoyltransferase.